Here is a 331-residue protein sequence, read N- to C-terminus: Methionyl-tRNA formyltransferase (331 aa).

110-113 contributes to the (6S)-5,6,7,8-tetrahydrofolate binding site; sequence SLLP. Residues 312-331 are disordered; sequence HAPAERVSAAGSPAGAGGAP.

It belongs to the Fmt family.

It carries out the reaction L-methionyl-tRNA(fMet) + (6R)-10-formyltetrahydrofolate = N-formyl-L-methionyl-tRNA(fMet) + (6S)-5,6,7,8-tetrahydrofolate + H(+). Its function is as follows. Attaches a formyl group to the free amino group of methionyl-tRNA(fMet). The formyl group appears to play a dual role in the initiator identity of N-formylmethionyl-tRNA by promoting its recognition by IF2 and preventing the misappropriation of this tRNA by the elongation apparatus. The polypeptide is Methionyl-tRNA formyltransferase (Frankia alni (strain DSM 45986 / CECT 9034 / ACN14a)).